The following is a 296-amino-acid chain: Ribosomal protein L11 methyltransferase (296 aa).

Positions 139, 163, 185, and 232 each coordinate S-adenosyl-L-methionine.

The protein belongs to the methyltransferase superfamily. PrmA family.

It is found in the cytoplasm. The enzyme catalyses L-lysyl-[protein] + 3 S-adenosyl-L-methionine = N(6),N(6),N(6)-trimethyl-L-lysyl-[protein] + 3 S-adenosyl-L-homocysteine + 3 H(+). Functionally, methylates ribosomal protein L11. The polypeptide is Ribosomal protein L11 methyltransferase (Rippkaea orientalis (strain PCC 8801 / RF-1) (Cyanothece sp. (strain PCC 8801))).